A 283-amino-acid polypeptide reads, in one-letter code: Protein/nucleic acid deglycase HchA (283 aa).

Residues His86, Glu91, and His123 each contribute to the Zn(2+) site. Cys185 acts as the Nucleophile in catalysis.

This sequence belongs to the peptidase C56 family. HchA subfamily. Homodimer.

The protein localises to the cytoplasm. The enzyme catalyses N(omega)-(1-hydroxy-2-oxopropyl)-L-arginyl-[protein] + H2O = lactate + L-arginyl-[protein] + H(+). It catalyses the reaction N(6)-(1-hydroxy-2-oxopropyl)-L-lysyl-[protein] + H2O = lactate + L-lysyl-[protein] + H(+). The catalysed reaction is S-(1-hydroxy-2-oxopropyl)-L-cysteinyl-[protein] + H2O = lactate + L-cysteinyl-[protein] + H(+). It carries out the reaction N(omega)-(1-hydroxy-2-oxoethyl)-L-arginyl-[protein] + H2O = L-arginyl-[protein] + glycolate + H(+). The enzyme catalyses N(6)-(1-hydroxy-2-oxoethyl)-L-lysyl-[protein] + H2O = glycolate + L-lysyl-[protein] + H(+). It catalyses the reaction S-(1-hydroxy-2-oxoethyl)-L-cysteinyl-[protein] + H2O = glycolate + L-cysteinyl-[protein] + H(+). The catalysed reaction is N(2)-(1-hydroxy-2-oxopropyl)-dGTP + H2O = lactate + dGTP + H(+). It carries out the reaction N(2)-(1-hydroxy-2-oxopropyl)-GTP + H2O = lactate + GTP + H(+). The enzyme catalyses N(2)-(1-hydroxy-2-oxopropyl)-GDP + H2O = lactate + GDP + H(+). It catalyses the reaction N(2)-(1-hydroxy-2-oxopropyl)-GMP + H2O = lactate + GMP + H(+). The catalysed reaction is N(2)-(1-hydroxy-2-oxoethyl)-dGTP + H2O = dGTP + glycolate + H(+). It carries out the reaction N(2)-(1-hydroxy-2-oxoethyl)-GTP + H2O = glycolate + GTP + H(+). The enzyme catalyses N(2)-(1-hydroxy-2-oxoethyl)-GDP + H2O = glycolate + GDP + H(+). It catalyses the reaction N(2)-(1-hydroxy-2-oxoethyl)-GMP + H2O = glycolate + GMP + H(+). The catalysed reaction is an N(2)-(1-hydroxy-2-oxopropyl)-guanosine in RNA + H2O = a guanosine in RNA + lactate + H(+). It carries out the reaction an N(2)-(1-hydroxy-2-oxopropyl)-2'-deoxyguanosine in DNA + H2O = a 2'-deoxyguanosine in DNA + lactate + H(+). The enzyme catalyses an N(2)-(1-hydroxy-2-oxoethyl)-guanosine in RNA + H2O = a guanosine in RNA + glycolate + H(+). It catalyses the reaction an N(2)-(1-hydroxy-2-oxoethyl)-2'-deoxyguanosine in DNA + H2O = a 2'-deoxyguanosine in DNA + glycolate + H(+). Functionally, protein and nucleotide deglycase that catalyzes the deglycation of the Maillard adducts formed between amino groups of proteins or nucleotides and reactive carbonyl groups of glyoxals. Thus, functions as a protein deglycase that repairs methylglyoxal- and glyoxal-glycated proteins, and releases repaired proteins and lactate or glycolate, respectively. Deglycates cysteine, arginine and lysine residues in proteins, and thus reactivates these proteins by reversing glycation by glyoxals. Acts on early glycation intermediates (hemithioacetals and aminocarbinols), preventing the formation of Schiff bases and advanced glycation endproducts (AGE). Also functions as a nucleotide deglycase able to repair glycated guanine in the free nucleotide pool (GTP, GDP, GMP, dGTP) and in DNA and RNA. Is thus involved in a major nucleotide repair system named guanine glycation repair (GG repair), dedicated to reversing methylglyoxal and glyoxal damage via nucleotide sanitization and direct nucleic acid repair. Plays an important role in protecting cells from carbonyl stress. In Escherichia coli (strain K12 / MC4100 / BW2952), this protein is Protein/nucleic acid deglycase HchA.